We begin with the raw amino-acid sequence, 270 residues long: MPELPEVETTRRGIEPHLVGQRVSRVLVRDRRLRWPIPEDLDVRLSGQRIEAVERRAKYLLIRAESGTLIVHLGMSGSLRLVDAASPAAKHEHVDILLESGQALRYTDPRRFGAMLWSDEPLAHVLLASLGPEPLGEDFDGDRLYRLSRGRSMAVKPFIMDNAVVVGVGNIYASEALFAAGIDPRRPAGSISRARYLKLGEEIRRILAMAIERGGTTLRDFVGGDGKPGYFQQELFVYGRGGEFCKSCGSTLREIRLGQRASVYCSRCQR.

The active-site Schiff-base intermediate with DNA is the Pro-2. Residue Glu-3 is the Proton donor of the active site. Lys-58 acts as the Proton donor; for beta-elimination activity in catalysis. Positions 91, 110, and 151 each coordinate DNA. The FPG-type zinc finger occupies 236-270; that stretch reads FVYGRGGEFCKSCGSTLREIRLGQRASVYCSRCQR. The active-site Proton donor; for delta-elimination activity is the Arg-260.

Belongs to the FPG family. Monomer. Requires Zn(2+) as cofactor.

The catalysed reaction is Hydrolysis of DNA containing ring-opened 7-methylguanine residues, releasing 2,6-diamino-4-hydroxy-5-(N-methyl)formamidopyrimidine.. It carries out the reaction 2'-deoxyribonucleotide-(2'-deoxyribose 5'-phosphate)-2'-deoxyribonucleotide-DNA = a 3'-end 2'-deoxyribonucleotide-(2,3-dehydro-2,3-deoxyribose 5'-phosphate)-DNA + a 5'-end 5'-phospho-2'-deoxyribonucleoside-DNA + H(+). Its function is as follows. Involved in base excision repair of DNA damaged by oxidation or by mutagenic agents. Acts as a DNA glycosylase that recognizes and removes damaged bases. Has a preference for oxidized purines, such as 7,8-dihydro-8-oxoguanine (8-oxoG). Has AP (apurinic/apyrimidinic) lyase activity and introduces nicks in the DNA strand. Cleaves the DNA backbone by beta-delta elimination to generate a single-strand break at the site of the removed base with both 3'- and 5'-phosphates. The polypeptide is Formamidopyrimidine-DNA glycosylase (Stutzerimonas stutzeri (strain A1501) (Pseudomonas stutzeri)).